The following is a 153-amino-acid chain: Myoglobin (153 aa).

In terms of domain architecture, Globin spans 2–147 (GLNDQEWQQV…FRNDMASKYK (146 aa)). H65 contributes to the nitrite binding site. An O2-binding site is contributed by H65. H93 contacts heme b.

The protein belongs to the globin family. In terms of assembly, monomeric.

It is found in the cytoplasm. Its subcellular location is the sarcoplasm. It carries out the reaction Fe(III)-heme b-[protein] + nitric oxide + H2O = Fe(II)-heme b-[protein] + nitrite + 2 H(+). The enzyme catalyses H2O2 + AH2 = A + 2 H2O. Its function is as follows. Monomeric heme protein which primary function is to store oxygen and facilitate its diffusion within muscle tissues. Reversibly binds oxygen through a pentacoordinated heme iron and enables its timely and efficient release as needed during periods of heightened demand. Depending on the oxidative conditions of tissues and cells, and in addition to its ability to bind oxygen, it also has a nitrite reductase activity whereby it regulates the production of bioactive nitric oxide. Under stress conditions, like hypoxia and anoxia, it also protects cells against reactive oxygen species thanks to its pseudoperoxidase activity. This is Myoglobin (MB) from Aptenodytes forsteri (Emperor penguin).